The following is a 209-amino-acid chain: Large ribosomal subunit protein uL4 (209 aa).

Positions 46 to 72 (GTSSTKTRSEVRGSSKKPWKQKGTGRA) are disordered. Basic residues predominate over residues 59–72 (SSKKPWKQKGTGRA).

This sequence belongs to the universal ribosomal protein uL4 family. In terms of assembly, part of the 50S ribosomal subunit.

One of the primary rRNA binding proteins, this protein initially binds near the 5'-end of the 23S rRNA. It is important during the early stages of 50S assembly. It makes multiple contacts with different domains of the 23S rRNA in the assembled 50S subunit and ribosome. Functionally, forms part of the polypeptide exit tunnel. The polypeptide is Large ribosomal subunit protein uL4 (Borreliella burgdorferi (strain ATCC 35210 / DSM 4680 / CIP 102532 / B31) (Borrelia burgdorferi)).